Reading from the N-terminus, the 369-residue chain is Olfactory receptor 2T1 (369 aa).

Topologically, residues Met-1–Leu-76 are extracellular. A glycan (N-linked (GlcNAc...) asparagine) is linked at Asn-56. The helical transmembrane segment at Ile-77–Phe-97 threads the bilayer. Over Leu-98–Thr-107 the chain is Cytoplasmic. Residues Pro-108 to Val-128 form a helical membrane-spanning segment. The Extracellular portion of the chain corresponds to Pro-129–Thr-148. The cysteines at positions 147 and 239 are disulfide-linked. A helical transmembrane segment spans residues Ala-149 to Ala-169. At Tyr-170–Cys-191 the chain is on the cytoplasmic side. The helical transmembrane segment at Trp-192–Ile-212 threads the bilayer. Residues Thr-213–Thr-247 lie on the Extracellular side of the membrane. The chain crosses the membrane as a helical span at residues Val-248–Tyr-268. The Cytoplasmic portion of the chain corresponds to Ala-269–Lys-286. A helical transmembrane segment spans residues Ala-287–Tyr-307. Topologically, residues Thr-308–Asp-321 are extracellular. The chain crosses the membrane as a helical span at residues Lys-322–Leu-342. The Cytoplasmic portion of the chain corresponds to Arg-343–Phe-369.

Belongs to the G-protein coupled receptor 1 family.

Its subcellular location is the cell membrane. Its function is as follows. Odorant receptor. The protein is Olfactory receptor 2T1 (OR2T1) of Homo sapiens (Human).